The primary structure comprises 955 residues: Sex determination protein fruitless (955 aa).

Disordered regions lie at residues 1–55 and 70–89; these read MMAT…HAHS and IETDVRAPPPPLPPPPLPLP. A compositionally biased stretch (basic residues) spans 35–55; that stretch reads PHGHGHLHSHAHAHGHGHAHS. A compositionally biased stretch (pro residues) spans 76 to 89; it reads APPPPLPPPPLPLP. Positions 131 to 196 constitute a BTB domain; it reads CDVTLACEGE…MYKGEVNVGQ (66 aa). Disordered regions lie at residues 229 to 288, 352 to 526, and 784 to 814; these read LRDS…SMSE, NRSA…LGGG, and ANHQLHQHPPSATHPSHSQSSPHYPSASGAG. The segment covering 233–246 has biased composition (polar residues); that stretch reads AASSPTGRGPSNYT. Basic and acidic residues-rich tracts occupy residues 258-279 and 360-379; these read AMRESRDSLRSRCERDLRDELT and CSDRGSERGTLERTDSRDDL. Low complexity predominate over residues 387-420; it reads KDNNNSNSSSTGGNNNNNNNNNNNSSSNNNNSSS. Over residues 421 to 446 the composition is skewed to basic and acidic residues; the sequence is NRERNNSGERERERERERERDRDREL. Low complexity-rich tracts occupy residues 464–475 and 790–814; these read SSSNCDNSLSSS and QHPPSATHPSHSQSSPHYPSASGAG. The segment at 918 to 941 adopts a C2H2-type zinc-finger fold; that stretch reads HECPVCGQKFTRRDNMKAHCKIKH.

Expressed in parts of the adult male brain associated with the courtship song and steps of the male courtship. Also expressed in the larval and pupal male mushroom body and optic lobe. Expressed in pupal female optic lobe.

It is found in the nucleus. Probably acts as a transcriptional regulator. Part of the somatic sex determination hierarchy; sex determination genes transformer (tra) and transformer-2 (tra-2) switch fru splicing from the male-specific pattern to the female-specific pattern through activation of the female-specific fru 5'-splice site. Vital for the development of males and females. Controls the development of the male specific abdominal muscle of Lawrence. Plays a role in male courtship behavior and sexual orientation. Enhances male-specific expression of takeout in brain-associated fat body. This Drosophila melanogaster (Fruit fly) protein is Sex determination protein fruitless (fru).